The primary structure comprises 2000 residues: Sodium channel protein type 3 subunit alpha (2000 aa).

Residues 1–128 lie on the Cytoplasmic side of the membrane; that stretch reads MAQALLVPPG…KIAIKILVHS (128 aa). The segment at 28-60 is disordered; the sequence is RAAEEKAKKPKKEQDNDDENKPKPNSDLEAGKN. A compositionally biased stretch (basic and acidic residues) spans 46 to 57; the sequence is ENKPKPNSDLEA. The stretch at 110–455 is one I repeat; sequence ILTPLNPVRK…QQMLEQLKKQ (346 aa). A helical transmembrane segment spans residues 129-146; sequence LFSMLIMCTILTNCVFMT. At 147–152 the chain is on the extracellular side; the sequence is LSNPPD. The chain crosses the membrane as a helical span at residues 153-174; the sequence is WTKNVEYTFTGIYTFESLIKIL. At 175-188 the chain is on the cytoplasmic side; it reads ARGFCLEDFTFLRD. The chain crosses the membrane as a helical span at residues 189–206; it reads PWNWLDFSVIVMAYVTEF. At 207–213 the chain is on the extracellular side; it reads VSLGNVS. N-linked (GlcNAc...) asparagine glycosylation occurs at asparagine 211. A helical membrane pass occupies residues 214 to 235; that stretch reads ALRTFRVLRALKTISVIPGLKT. Topologically, residues 236–249 are cytoplasmic; it reads IVGALIQSVKKLSD. A helical transmembrane segment spans residues 250–269; that stretch reads VMILTVFCLSVFALIGLQLF. At 270-369 the chain is on the extracellular side; that stretch reads MGNLRNKCLQ…NYGYTSFDTF (100 aa). N-linked (GlcNAc...) asparagine glycans are attached at residues asparagine 290, asparagine 296, asparagine 302, asparagine 307, and asparagine 339. Residues 370–386 constitute an intramembrane region (pore-forming); that stretch reads SWAFLSLFRLMTQDYWE. The Extracellular segment spans residues 387-397; that stretch reads NLYQLTLRAAG. Residues 398-424 traverse the membrane as a helical segment; the sequence is KTYMIFFVLVIFLGSFYLVNLILAVVA. The Cytoplasmic portion of the chain corresponds to 425 to 761; the sequence is MAYEEQNQAT…LVNLIVMDPF (337 aa). Serine 484, serine 485, and serine 486 each carry phosphoserine. Disordered stretches follow at residues 493–528, 587–631, and 662–681; these read SKSAKEWRNRRKKRRQREHLEGNNKGERDSFPKSES, VGSE…ASMS, and ALTSPTGQLPPEGTTTETEV. The segment covering 500–509 has biased composition (basic residues); sequence RNRRKKRRQR. Basic and acidic residues-rich tracts occupy residues 510–528 and 596–610; these read EHLEGNNKGERDSFPKSES and DEHSTFEDSESRRDS. A compositionally biased stretch (polar residues) spans 662 to 678; the sequence is ALTSPTGQLPPEGTTTE. An II repeat occupies 742–1014; that stretch reads CCDAWLKVKH…QIAVGRMQKG (273 aa). The chain crosses the membrane as a helical span at residues 762–779; the sequence is VDLAITICIVLNTLFMAM. The Extracellular portion of the chain corresponds to 780 to 787; it reads EHYPMTEQ. The chain crosses the membrane as a helical span at residues 788–812; the sequence is FSSVLTVGNLVFTGIFTAEMVLKII. Over 813–822 the chain is Cytoplasmic; sequence AMDPYYYFQE. A helical transmembrane segment spans residues 823 to 842; the sequence is GWNIFDGIIVSLSLMELGLS. The Extracellular segment spans residues 843–846; it reads NVEG. A helical membrane pass occupies residues 847–865; the sequence is LSVLRSFRLLRVFKLAKSW. Topologically, residues 866–883 are cytoplasmic; the sequence is PTLNMLIKIIGNSVGALG. A helical transmembrane segment spans residues 884–904; that stretch reads NLTLVLAIIVFIFAVVGMQLF. Residues 905-929 are Extracellular-facing; sequence GKSYKECVCKINDDCTLPRWHMNDF. A disulfide bridge links cysteine 913 with cysteine 919. The pore-forming intramembrane region spans 930–945; sequence FHSFLIVFRVLCGEWI. Topologically, residues 946 to 956 are extracellular; that stretch reads ETMWDCMEVAG. Cysteine 951 and cysteine 960 are oxidised to a cystine. Residues 957–983 form a helical membrane-spanning segment; that stretch reads QTMCLIVFMLVMVIGNLVVLNLFLALL. The Cytoplasmic segment spans residues 984–1205; it reads LSSFSSDNLA…RKTCYSIVEH (222 aa). A disordered region spans residues 1118 to 1162; the sequence is EEFSSESELEESKEKLNATSSSEGSTVDVVLPREGEQAETEPEED. Residues 1188-1499 form an III repeat; it reads KGKIWWNLRK…KKYYNAMKKL (312 aa). The helical transmembrane segment at 1206-1226 threads the bilayer; it reads NWFETFIVFMILLSSGALAFE. Residues 1227–1238 are Extracellular-facing; the sequence is DIYIEQRKTIKT. The chain crosses the membrane as a helical span at residues 1239 to 1260; it reads MLEYADKVFTYIFILEMLLKWV. The Cytoplasmic portion of the chain corresponds to 1261–1266; that stretch reads AYGFQT. Residues 1267–1292 traverse the membrane as a helical segment; that stretch reads YFTNAWCWLDFLIVDVSLVSLVANAL. At 1293 to 1301 the chain is on the extracellular side; sequence GYSELGAIK. A helical transmembrane segment spans residues 1302 to 1320; it reads SLRTLRALRPLRALSRFEG. Topologically, residues 1321-1333 are cytoplasmic; it reads MRVVVNALVGAIP. The chain crosses the membrane as a helical span at residues 1334–1356; sequence SIMNVLLVCLIFWLIFSIMGVNL. Residues 1357–1402 are Extracellular-facing; sequence FAGKFYHCVNMTTGNMFDISDVNNLSDCQALGKQARWKNVKVNFDN. Cysteine 1364 and cysteine 1384 form a disulfide bridge. N-linked (GlcNAc...) asparagine glycosylation is found at asparagine 1366 and asparagine 1380. Positions 1403–1419 form an intramembrane region, pore-forming; that stretch reads VGAGYLALLQVATFKGW. Residues 1420-1442 are Extracellular-facing; sequence MDIMYAAVDSRDVKLQPVYEENL. Residues 1443–1468 form a helical membrane-spanning segment; it reads YMYLYFVIFIIFGSFFTLNLFIGVII. At 1469 to 1526 the chain is on the cytoplasmic side; sequence DNFNQQKKKFGGQDIFMTEEQKKYYNAMKKLGSKKPQKPIPRPANKFQGMVFDFVTRQ. The residue at position 1501 (serine 1501) is a Phosphoserine; by PKC. Residues 1508–1806 form an IV repeat; it reads IPRPANKFQG…WEKFDPDATQ (299 aa). A helical transmembrane segment spans residues 1527–1545; that stretch reads VFDISIMILICLNMVTMMV. The Extracellular portion of the chain corresponds to 1546-1553; it reads ETDDQGKY. Residues 1554-1577 traverse the membrane as a helical segment; the sequence is MTLVLSRINLVFIVLFTGEFVLKL. Residues 1578-1587 are Cytoplasmic-facing; the sequence is VSLRHYYFTI. The helical transmembrane segment at 1588–1605 threads the bilayer; sequence GWNIFDFVVVILSIVGMF. At 1606–1617 the chain is on the extracellular side; that stretch reads LAEMIEKYFVSP. The helical transmembrane segment at 1618 to 1640 threads the bilayer; sequence TLFRVIRLARIGRILRLIKGAKG. Over 1641–1653 the chain is Cytoplasmic; it reads IRTLLFALMMSLP. Residues 1654-1677 form a helical membrane-spanning segment; that stretch reads ALFNIGLLLFLVMFIYAIFGMSNF. Residues 1678 to 1699 are Extracellular-facing; that stretch reads AYVKKEAGIDDMFNFETFGNSM. Residues 1700–1712 constitute an intramembrane region (pore-forming); sequence ICLFQITTSAGWD. Topologically, residues 1713-1744 are extracellular; the sequence is GLLAPILNSAPPDCDPDTIHPGSSVKGDCGNP. A helical transmembrane segment spans residues 1745–1770; it reads SVGIFFFVSYIIISFLVVVNMYIAVI. The Cytoplasmic portion of the chain corresponds to 1771-2000; sequence LENFSVATEE…KGKEVRENQK (230 aa). The 30-residue stretch at 1900–1929 folds into the IQ domain; it reads EEVSAAIIQRNFRCYLLKQRLKNISSNYNK. The interval 1949 to 2000 is disordered; sequence LNGNSTPEKTDGSSSTTSPPSYDSVTKPDKEKFEKDKPEKESKGKEVRENQK. Positions 1974–2000 are enriched in basic and acidic residues; that stretch reads TKPDKEKFEKDKPEKESKGKEVRENQK.

This sequence belongs to the sodium channel (TC 1.A.1.10) family. Nav1.3/SCN3A subfamily. Heterooligomer of an alpha subunit, SCN3A, and 1 to 3 regulatory beta subunits including SCN1B and SCN2B; disulfide-linked with some beta subunits like SCN2B. Interacts with NEDD4L; could regulate expression of SCN3A at the plasma membrane through ubiquitination-regulated endocytosis. Interacts with the conotoxin GVIIJ. Post-translationally, may be ubiquitinated by NEDD4L; which would promote its endocytosis. In terms of processing, phosphorylation at Ser-1501 by PKC in a highly conserved cytoplasmic loop slows inactivation of the sodium channel and reduces peak sodium currents. As to expression, expressed in enterochromaffin cells in both colon and small bowel (at protein level).

The protein localises to the cell membrane. The protein resides in the basal cell membrane. It catalyses the reaction Na(+)(in) = Na(+)(out). Its function is as follows. Pore-forming subunit of Nav1.3, a voltage-gated sodium (Nav) channel that directly mediates the depolarizing phase of action potentials in excitable membranes. Navs, also called VGSCs (voltage-gated sodium channels) or VDSCs (voltage-dependent sodium channels), operate by switching between closed and open conformations depending on the voltage difference across the membrane. In the open conformation they allow Na(+) ions to selectively pass through the pore, along their electrochemical gradient. The influx of Na+ ions provokes membrane depolarization, initiating the propagation of electrical signals throughout cells and tissues. In some secretory cell types, it also participates in cell excitability through membrane depolarization and regulates cells responsiveness to stimuli triggering secretion. For instance, it controls the release of serotonin/5-hydroxytryptamine by enterochromaffin cells and is required for both glucagon- and glucose-induced insulin secretion in pancreatic endocrine cells. The sequence is that of Sodium channel protein type 3 subunit alpha from Homo sapiens (Human).